The primary structure comprises 946 residues: Bifunctional glutamine synthetase adenylyltransferase/adenylyl-removing enzyme (946 aa).

Residues 1-440 (MKPLSSPLQQ…VFNELIGDDE (440 aa)) form an adenylyl removase region. The adenylyl transferase stretch occupies residues 449-946 (SEQWRELWQD…ASWQKWLVEE (498 aa)).

It belongs to the GlnE family. Mg(2+) is required as a cofactor.

The enzyme catalyses [glutamine synthetase]-O(4)-(5'-adenylyl)-L-tyrosine + phosphate = [glutamine synthetase]-L-tyrosine + ADP. The catalysed reaction is [glutamine synthetase]-L-tyrosine + ATP = [glutamine synthetase]-O(4)-(5'-adenylyl)-L-tyrosine + diphosphate. Involved in the regulation of glutamine synthetase GlnA, a key enzyme in the process to assimilate ammonia. When cellular nitrogen levels are high, the C-terminal adenylyl transferase (AT) inactivates GlnA by covalent transfer of an adenylyl group from ATP to specific tyrosine residue of GlnA, thus reducing its activity. Conversely, when nitrogen levels are low, the N-terminal adenylyl removase (AR) activates GlnA by removing the adenylyl group by phosphorolysis, increasing its activity. The regulatory region of GlnE binds the signal transduction protein PII (GlnB) which indicates the nitrogen status of the cell. This is Bifunctional glutamine synthetase adenylyltransferase/adenylyl-removing enzyme from Escherichia coli O7:K1 (strain IAI39 / ExPEC).